A 420-amino-acid chain; its full sequence is Glutamyl-tRNA reductase (420 aa).

Residues 49–52 (TCNR), Ser109, 114–116 (EPQ), and Gln120 each bind substrate. Cys50 acts as the Nucleophile in catalysis. NADP(+) is bound at residue 189-194 (GAGETI).

It belongs to the glutamyl-tRNA reductase family. In terms of assembly, homodimer.

It catalyses the reaction (S)-4-amino-5-oxopentanoate + tRNA(Glu) + NADP(+) = L-glutamyl-tRNA(Glu) + NADPH + H(+). Its pathway is porphyrin-containing compound metabolism; protoporphyrin-IX biosynthesis; 5-aminolevulinate from L-glutamyl-tRNA(Glu): step 1/2. Catalyzes the NADPH-dependent reduction of glutamyl-tRNA(Glu) to glutamate 1-semialdehyde (GSA). This chain is Glutamyl-tRNA reductase, found in Yersinia enterocolitica serotype O:8 / biotype 1B (strain NCTC 13174 / 8081).